The primary structure comprises 73 residues: NAD(P)H-quinone oxidoreductase subunit L (73 aa).

The next 2 helical transmembrane spans lie at 7–27 (LIGL…PFLF) and 44–64 (VLMF…APFM).

This sequence belongs to the complex I NdhL subunit family. In terms of assembly, NDH-1 can be composed of about 15 different subunits; different subcomplexes with different compositions have been identified which probably have different functions.

It is found in the cellular thylakoid membrane. The enzyme catalyses a plastoquinone + NADH + (n+1) H(+)(in) = a plastoquinol + NAD(+) + n H(+)(out). The catalysed reaction is a plastoquinone + NADPH + (n+1) H(+)(in) = a plastoquinol + NADP(+) + n H(+)(out). In terms of biological role, NDH-1 shuttles electrons from an unknown electron donor, via FMN and iron-sulfur (Fe-S) centers, to quinones in the respiratory and/or the photosynthetic chain. The immediate electron acceptor for the enzyme in this species is believed to be plastoquinone. Couples the redox reaction to proton translocation, and thus conserves the redox energy in a proton gradient. Cyanobacterial NDH-1 also plays a role in inorganic carbon-concentration. In Synechococcus sp. (strain JA-3-3Ab) (Cyanobacteria bacterium Yellowstone A-Prime), this protein is NAD(P)H-quinone oxidoreductase subunit L.